Reading from the N-terminus, the 508-residue chain is Phenylalanine--tRNA ligase alpha subunit (508 aa).

Ala2 carries the N-acetylalanine modification. Thr190 is modified (phosphothreonine). 2 positions are modified to phosphoserine: Ser193 and Ser301. Position 311 is an N6-acetyllysine (Lys311). Residues Thr329, 372–374, and Tyr412 each bind L-phenylalanine; that span reads QIE. Glu414 contacts Mg(2+). Phe438 provides a ligand contact to L-phenylalanine.

The protein belongs to the class-II aminoacyl-tRNA synthetase family. Phe-tRNA synthetase alpha subunit type 2 subfamily. As to quaternary structure, heterotetramer; dimer of two heterodimers formed by FARSA and FARSB. Mg(2+) is required as a cofactor.

It is found in the cytoplasm. It carries out the reaction tRNA(Phe) + L-phenylalanine + ATP = L-phenylalanyl-tRNA(Phe) + AMP + diphosphate + H(+). The polypeptide is Phenylalanine--tRNA ligase alpha subunit (FARSA) (Pongo abelii (Sumatran orangutan)).